Here is a 198-residue protein sequence, read N- to C-terminus: Golgi to ER traffic protein 1 (198 aa).

Residues 1–6 (MDPFSI) are Lumenal-facing. Residues 7 to 26 (LLTLTLIILAQNAVRIVGKS) form a helical membrane-spanning segment. Residues 27-110 (QIHQSIWNLY…AIEKYLGLAI (84 aa)) are Cytoplasmic-facing. Residues 73-106 (KWTKLNRKYDQLQTEIKAVSDQVSQQQQAIEKYL) adopt a coiled-coil conformation. The chain crosses the membrane as a helical span at residues 111-131 (SVTTTLPLWLFRFKYRKQPLF). Topologically, residues 132-155 (YFPKDTFPSYLEWILSFPSVPQGS) are lumenal. A helical transmembrane segment spans residues 156–172 (IGIMFWILLLNKFVSNL). Residues 173 to 198 (EFIVKTFSTKVEKPVPIVKVEDLSPK) are Cytoplasmic-facing.

This sequence belongs to the WRB/GET1 family. Component of the Golgi to ER traffic (GET) complex, which is composed of GET1, GET2 and GET3. Within the complex, GET1 and GET2 form a heterotetramer which is stabilized by phosphatidylinositol binding and which binds to the GET3 homodimer.

It is found in the endoplasmic reticulum membrane. The protein localises to the golgi apparatus membrane. Required for the post-translational delivery of tail-anchored (TA) proteins to the endoplasmic reticulum. Together with GET2, acts as a membrane receptor for soluble GET3, which recognizes and selectively binds the transmembrane domain of TA proteins in the cytosol. The GET complex cooperates with the HDEL receptor ERD2 to mediate the ATP-dependent retrieval of resident ER proteins that contain a C-terminal H-D-E-L retention signal from the Golgi to the ER. The chain is Golgi to ER traffic protein 1 from Komagataella phaffii (strain GS115 / ATCC 20864) (Yeast).